The sequence spans 827 residues: Leucine--tRNA ligase (827 aa).

The short motif at 42–52 (PYPSGKLHMGH) is the 'HIGH' region element. The 'KMSKS' region signature appears at 583–587 (KMSKS). K586 lines the ATP pocket.

It belongs to the class-I aminoacyl-tRNA synthetase family.

It localises to the cytoplasm. It catalyses the reaction tRNA(Leu) + L-leucine + ATP = L-leucyl-tRNA(Leu) + AMP + diphosphate. In Pelotomaculum thermopropionicum (strain DSM 13744 / JCM 10971 / SI), this protein is Leucine--tRNA ligase.